The primary structure comprises 431 residues: Enolase (431 aa).

Gln-163 contributes to the (2R)-2-phosphoglycerate binding site. Glu-205 (proton donor) is an active-site residue. Mg(2+)-binding residues include Asp-242, Glu-288, and Asp-315. 4 residues coordinate (2R)-2-phosphoglycerate: Lys-340, Arg-369, Ser-370, and Lys-391. Lys-340 serves as the catalytic Proton acceptor.

Belongs to the enolase family. Requires Mg(2+) as cofactor.

It localises to the cytoplasm. The protein resides in the secreted. It is found in the cell surface. The enzyme catalyses (2R)-2-phosphoglycerate = phosphoenolpyruvate + H2O. It functions in the pathway carbohydrate degradation; glycolysis; pyruvate from D-glyceraldehyde 3-phosphate: step 4/5. Its function is as follows. Catalyzes the reversible conversion of 2-phosphoglycerate (2-PG) into phosphoenolpyruvate (PEP). It is essential for the degradation of carbohydrates via glycolysis. The polypeptide is Enolase (Acholeplasma laidlawii (strain PG-8A)).